The primary structure comprises 604 residues: Kelch-like protein 15 (604 aa).

In terms of domain architecture, BTB spans 31-98 (LDVTLVIEDH…MYYGTIELSM (68 aa)). The BACK domain occupies 133–237 (CAEIMRLLDD…TPTSVFEKVK (105 aa)). 5 Kelch repeats span residues 328–379 (FVFL…VIGK), 381–426 (IYAV…VLNN), 428–473 (LFIT…NKSK), 489–542 (KLYV…VLDK), and 544–590 (IMVL…VCNL).

As to quaternary structure, homodimer. Dimerization does not affect PPP2R5B-binding, but is required for its proteasomal degradation. Interacts with CUL3. Directly interacts with PPP2R5B; this interaction leads to PPP2R5B proteasomal degradation. Interacts with RBBP8/CtIP; this interaction leads to RBBP8 proteasomal degradation. Interacts with PACMP micropeptide; interaction prevents ubiquitination and degradation of RBBP8/CtIP.

It is found in the nucleus. It participates in protein modification; protein ubiquitination. In terms of biological role, substrate-specific adapter for CUL3 E3 ubiquitin-protein ligase complex. Acts as an adapter for CUL3 to target the serine/threonine-protein phosphatase 2A (PP2A) subunit PPP2R5B for ubiquitination and subsequent proteasomal degradation, thus promoting exchange with other regulatory subunits. Acts as an adapter for CUL3 to target the DNA-end resection factor RBBP8/CtIP for ubiquitination and subsequent proteasomal degradation. Through the regulation of RBBP8/CtIP protein turnover, plays a key role in DNA damage response, favoring DNA double-strand repair through error-prone non-homologous end joining (NHEJ) over error-free, RBBP8-mediated homologous recombination (HR). In Homo sapiens (Human), this protein is Kelch-like protein 15 (KLHL15).